Reading from the N-terminus, the 248-residue chain is Small ribosomal subunit protein uS2 (248 aa).

The protein belongs to the universal ribosomal protein uS2 family.

In Cupriavidus necator (strain ATCC 17699 / DSM 428 / KCTC 22496 / NCIMB 10442 / H16 / Stanier 337) (Ralstonia eutropha), this protein is Small ribosomal subunit protein uS2.